Here is a 202-residue protein sequence, read N- to C-terminus: Casparian strip membrane protein 1 (202 aa).

The segment covering 1–13 (MEKSESSTIQIAE) has biased composition (polar residues). Positions 1 to 30 (MEKSESSTIQIAESSKDRKGKAPLLPPPVH) are disordered. Residues 1-42 (MEKSESSTIQIAESSKDRKGKAPLLPPPVHHERAAGYKRGVA) are Cytoplasmic-facing. A helical transmembrane segment spans residues 43–63 (IFDLILRISAATAALAATIVM). The Extracellular segment spans residues 64-90 (GTTEQTLPFFTQFFQFRASYDDLPTFT). The chain crosses the membrane as a helical span at residues 91 to 111 (FFVIAMAIVTGYLILSVPFSI). Residues 112 to 130 (VCIARPVVAAPRILLILCD) are Cytoplasmic-facing. Residues 131–151 (TLTVTLATSAAGASAAIVYLA) form a helical membrane-spanning segment. Topologically, residues 152–177 (HNGXSDANWLAICQQFNDFCQRVSGA) are extracellular. The chain crosses the membrane as a helical span at residues 178 to 198 (VVAAFVSAVLLIFLVVLSAIV). Residues 199–202 (LKKH) are Cytoplasmic-facing.

This sequence belongs to the Casparian strip membrane proteins (CASP) family. As to quaternary structure, homodimer and heterodimers.

The protein resides in the cell membrane. Functionally, regulates membrane-cell wall junctions and localized cell wall deposition. Required for establishment of the Casparian strip membrane domain (CSD) and the subsequent formation of Casparian strips, a cell wall modification of the root endodermis that determines an apoplastic barrier between the intraorganismal apoplasm and the extraorganismal apoplasm and prevents lateral diffusion. The polypeptide is Casparian strip membrane protein 1 (Triphysaria pusilla (Dwarf owl's-clover)).